The primary structure comprises 104 residues: Protein translation factor SUI1 homolog (104 aa).

The protein belongs to the SUI1 family.

This chain is Protein translation factor SUI1 homolog, found in Ignicoccus hospitalis (strain KIN4/I / DSM 18386 / JCM 14125).